Consider the following 80-residue polypeptide: Metallothionein-like protein type 2, MT2-22 (80 aa).

The protein belongs to the metallothionein superfamily. Type 15 family.

Metallothioneins have a high content of cysteine residues that bind various heavy metals. The chain is Metallothionein-like protein type 2, MT2-22 from Brassica juncea (Indian mustard).